Here is a 389-residue protein sequence, read N- to C-terminus: Brix domain-containing protein C1B9.03c (389 aa).

The region spanning 28–309 (SMVIRSGASE…LIKITEDAMG (282 aa)) is the Brix domain. Positions 323 to 350 (EEIKQQDNFHEQSRALKEKRKKEQDENV) are enriched in basic and acidic residues. The interval 323–389 (EEIKQQDNFH…EGSSAYSDTE (67 aa)) is disordered. A compositionally biased stretch (basic residues) spans 351–362 (RRKRENKKRRKD). Residue Ser377 is modified to Phosphoserine. The span at 379 to 389 (NEGSSAYSDTE) shows a compositional bias: polar residues.

The chain is Brix domain-containing protein C1B9.03c from Schizosaccharomyces pombe (strain 972 / ATCC 24843) (Fission yeast).